We begin with the raw amino-acid sequence, 471 residues long: Glutamate--tRNA ligase (471 aa).

Positions 9 to 19 (PSPTGYLHVGG) match the 'HIGH' region motif. 4 residues coordinate Zn(2+): Cys98, Cys100, Cys125, and His127. The 'KMSKS' region signature appears at 237-241 (KLSKR). Residue Lys240 participates in ATP binding.

This sequence belongs to the class-I aminoacyl-tRNA synthetase family. Glutamate--tRNA ligase type 1 subfamily. In terms of assembly, monomer. Zn(2+) is required as a cofactor.

It is found in the cytoplasm. The catalysed reaction is tRNA(Glu) + L-glutamate + ATP = L-glutamyl-tRNA(Glu) + AMP + diphosphate. Its function is as follows. Catalyzes the attachment of glutamate to tRNA(Glu) in a two-step reaction: glutamate is first activated by ATP to form Glu-AMP and then transferred to the acceptor end of tRNA(Glu). The sequence is that of Glutamate--tRNA ligase from Escherichia coli O9:H4 (strain HS).